An 83-amino-acid chain; its full sequence is Toxin AahP985 (83 aa).

An N-terminal signal peptide occupies residues 1 to 18 (MNYLVMISLALLIAGVDS). Residues 20–82 (RDAYIAKNDN…VPIKLSGECH (63 aa)) enclose the LCN-type CS-alpha/beta domain. Disulfide bonds link Cys-30-Cys-81, Cys-34-Cys-54, Cys-40-Cys-64, and Cys-44-Cys-66.

This sequence belongs to the long (4 C-C) scorpion toxin superfamily. Sodium channel inhibitor family. Alpha subfamily. In terms of tissue distribution, expressed by the venom gland.

It localises to the secreted. Its function is as follows. Binds voltage-independently at site-3 of sodium channels (Nav) and inhibits the inactivation of the activated channels, thereby blocking neuronal transmission. The polypeptide is Toxin AahP985 (Androctonus australis (Sahara scorpion)).